The primary structure comprises 351 residues: uncharacterized protein (351 aa).

Asp215, Asp226, His290, Glu319, and Glu333 together coordinate Mn(2+).

The protein belongs to the peptidase M24B family. It depends on Mn(2+) as a cofactor.

This is an uncharacterized protein from Staphylococcus haemolyticus (strain JCSC1435).